Consider the following 464-residue polypeptide: Trigger factor (464 aa).

Residues Gly162–Pro243 enclose the PPIase FKBP-type domain. Residues Gly428 to Lys464 form a disordered region.

It belongs to the FKBP-type PPIase family. Tig subfamily.

Its subcellular location is the cytoplasm. The catalysed reaction is [protein]-peptidylproline (omega=180) = [protein]-peptidylproline (omega=0). Functionally, involved in protein export. Acts as a chaperone by maintaining the newly synthesized protein in an open conformation. Functions as a peptidyl-prolyl cis-trans isomerase. The chain is Trigger factor from Rhodococcus opacus (strain B4).